Here is a 390-residue protein sequence, read N- to C-terminus: S-adenosylmethionine synthase 3 (390 aa).

Glutamate 9 lines the Mg(2+) pocket. Histidine 15 serves as a coordination point for ATP. Residue glutamate 43 coordinates K(+). Glutamate 56 and glutamine 99 together coordinate L-methionine. ATP-binding positions include 167–169 (DGK), 235–238 (SGRF), aspartate 246, 252–253 (RK), alanine 269, lysine 273, and lysine 277. Residue aspartate 246 participates in L-methionine binding. Lysine 277 provides a ligand contact to L-methionine.

Belongs to the AdoMet synthase family. Homotetramer. Mn(2+) is required as a cofactor. Requires Mg(2+) as cofactor. It depends on Co(2+) as a cofactor. K(+) serves as cofactor. As to expression, mostly expressed in stems and leaves.

The protein localises to the cytoplasm. The enzyme catalyses L-methionine + ATP + H2O = S-adenosyl-L-methionine + phosphate + diphosphate. It functions in the pathway amino-acid biosynthesis; S-adenosyl-L-methionine biosynthesis; S-adenosyl-L-methionine from L-methionine: step 1/1. Its function is as follows. Catalyzes the formation of S-adenosylmethionine from methionine and ATP. The reaction comprises two steps that are both catalyzed by the same enzyme: formation of S-adenosylmethionine (AdoMet) and triphosphate, and subsequent hydrolysis of the triphosphate. The sequence is that of S-adenosylmethionine synthase 3 (SAM3) from Solanum lycopersicum (Tomato).